The chain runs to 363 residues: S-methylmethionine--homocysteine S-methyltransferase BHMT2 (363 aa).

In terms of domain architecture, Hcy-binding spans 11–305 (RGILERLESG…YHIRAIAEEL (295 aa)). Zn(2+)-binding residues include Cys208, Cys290, and Cys291. The residue at position 321 (Ser321) is a Phosphoserine.

In terms of assembly, homotetramer. It depends on Zn(2+) as a cofactor.

The catalysed reaction is S-methyl-L-methionine + L-homocysteine = 2 L-methionine + H(+). The protein operates within amino-acid biosynthesis; L-methionine biosynthesis via de novo pathway; L-methionine from L-homocysteine (BhmT route): step 1/1. Its function is as follows. Involved in the regulation of homocysteine metabolism. Converts betaine and homocysteine to dimethylglycine and methionine, respectively. This reaction is also required for the irreversible oxidation of choline. The protein is S-methylmethionine--homocysteine S-methyltransferase BHMT2 (BHMT2) of Pongo abelii (Sumatran orangutan).